A 702-amino-acid polypeptide reads, in one-letter code: Zinc finger CCCH domain-containing protein 62 (702 aa).

A disordered region spans residues 1-77; it reads MAAPAADDDD…SYDDPTFDPA (77 aa). Positions 18-54 are enriched in acidic residues; it reads EEDDGEEEEGSEEEVESDDEEEEEGEGYDWSEEDDPE. The SAP domain occupies 132–166; sequence LEKLKVYECKAYLRMHKLRLSGNKEVLLTRIRGQI. 4 disordered regions span residues 288 to 349, 405 to 532, 546 to 602, and 634 to 673; these read EKHA…NTVQ, SRTS…QQQP, GGTS…RETH, and QMSQDQYHHQQNHHQNYHGRQGMNGNQYHDRQNHNQNPQR. Residues 298–325 show a composition bias toward basic and acidic residues; it reads KTREVRIKDKENERMRRLNRNKENKSKG. Polar residues-rich tracts occupy residues 326–349 and 405–419; these read QDNMNKKSSQAVFPQHTVTTNTVQ and SRTSTTQLINHQAPS. Positions 430-448 are enriched in low complexity; the sequence is QQQQQQQPPKSIKPAPIQQ. 4 stretches are compositionally biased toward polar residues: residues 472–502, 522–532, 546–565, and 575–591; these read SQEQRAAVSQTSAARQDFTNHQAPPSRQHGG, QQAVSYTQQQP, GGTSTSRTGFMDRQSNNWGS, and PFTQKAKTYQHGSNGSG. Residues 674 to 702 form a C3H1-type zinc finger; the sequence is FRPWKPCFIYQQQGWCPYGENCKFMHDLR.

The chain is Zinc finger CCCH domain-containing protein 62 from Oryza sativa subsp. japonica (Rice).